The primary structure comprises 805 residues: Kinesin-like protein KIP3 (805 aa).

One can recognise a Kinesin motor domain in the interval Ser10–Ile438. Position 192 to 199 (Gly192 to Thr199) interacts with ATP. Positions Leu449 to Lys481 form a coiled coil. The disordered stretch occupies residues Asn720 to Lys805. The span at Met764–Gly773 shows a compositional bias: polar residues. Residues Pro774–Ala783 are compositionally biased toward low complexity. Over residues Ser792–Lys805 the composition is skewed to polar residues.

It belongs to the TRAFAC class myosin-kinesin ATPase superfamily. Kinesin family. Kinesin II subfamily.

The protein resides in the cytoplasm. It localises to the cytoskeleton. In Saccharomyces cerevisiae (strain ATCC 204508 / S288c) (Baker's yeast), this protein is Kinesin-like protein KIP3 (KIP3).